A 127-amino-acid chain; its full sequence is Large ribosomal subunit protein bL17 (127 aa).

This sequence belongs to the bacterial ribosomal protein bL17 family. In terms of assembly, part of the 50S ribosomal subunit. Contacts protein L32.

This chain is Large ribosomal subunit protein bL17, found in Pelobacter propionicus (strain DSM 2379 / NBRC 103807 / OttBd1).